The sequence spans 272 residues: 3-methyl-2-oxobutanoate hydroxymethyltransferase (272 aa).

Mg(2+) is bound by residues aspartate 42 and aspartate 86. 3-methyl-2-oxobutanoate is bound by residues 42 to 43 (DS), aspartate 86, and lysine 116. Glutamate 118 is a Mg(2+) binding site. Residue glutamate 185 is the Proton acceptor of the active site.

It belongs to the PanB family. As to quaternary structure, homodecamer; pentamer of dimers. The cofactor is Mg(2+).

The protein resides in the cytoplasm. It catalyses the reaction 3-methyl-2-oxobutanoate + (6R)-5,10-methylene-5,6,7,8-tetrahydrofolate + H2O = 2-dehydropantoate + (6S)-5,6,7,8-tetrahydrofolate. It participates in cofactor biosynthesis; (R)-pantothenate biosynthesis; (R)-pantoate from 3-methyl-2-oxobutanoate: step 1/2. Functionally, catalyzes the reversible reaction in which hydroxymethyl group from 5,10-methylenetetrahydrofolate is transferred onto alpha-ketoisovalerate to form ketopantoate. The protein is 3-methyl-2-oxobutanoate hydroxymethyltransferase of Prochlorococcus marinus (strain MIT 9303).